Here is a 145-residue protein sequence, read N- to C-terminus: RNA polymerase I-specific transcription initiation factor RRN10 (145 aa).

In terms of assembly, component of the UAF (upstream activation factor) complex which consists of UAF30, RRN5, RRN9, RRN10, and histones H3 and H4.

The protein localises to the nucleus. It localises to the nucleolus. Component of the UAF (upstream activation factor) complex which interacts with the upstream element of the RNA polymerase I promoter and forms a stable preinitiation complex. Together with SPT15/TBP UAF seems to stimulate basal transcription to a fully activated level. This is RNA polymerase I-specific transcription initiation factor RRN10 (RRN10) from Saccharomyces cerevisiae (strain ATCC 204508 / S288c) (Baker's yeast).